Reading from the N-terminus, the 244-residue chain is Extracellular superoxide dismutase [Cu-Zn] (244 aa).

The first 18 residues, 1-18 (MLALVCSCLLLAALPADT), serve as a signal peptide directing secretion. Cystine bridges form between Cys67/Cys212 and Cys129/Cys211. An N-linked (GlcNAc...) asparagine glycan is attached at Asn111. The Cu cation site is built by His118, His120, and His135. Zn(2+) contacts are provided by His135, His143, His146, and Asp149. A Cu cation-binding site is contributed by His185. Residues 221 to 244 (PWARQAQEHAERKKRRRESECKAA) are disordered. A compositionally biased stretch (basic and acidic residues) spans 226–244 (AQEHAERKKRRRESECKAA).

It belongs to the Cu-Zn superoxide dismutase family. In terms of assembly, homotetramer. Directly interacts with ATP7A; this interaction is copper-dependent and is required for SOD3 activity. The cofactor is Cu cation. Zn(2+) serves as cofactor.

Its subcellular location is the secreted. It localises to the extracellular space. The protein localises to the golgi apparatus. The protein resides in the trans-Golgi network. It carries out the reaction 2 superoxide + 2 H(+) = H2O2 + O2. Functionally, protect the extracellular space from toxic effect of reactive oxygen intermediates by converting superoxide radicals into hydrogen peroxide and oxygen. The chain is Extracellular superoxide dismutase [Cu-Zn] (SOD3) from Oryctolagus cuniculus (Rabbit).